The following is a 110-amino-acid chain: uncharacterized protein (110 aa).

An N-terminal signal peptide occupies residues 1–19 (MKYLVGCLCLAAICLSAGA). The N-linked (GlcNAc...) asparagine glycan is linked to Asn-101.

In terms of tissue distribution, component of the acid-soluble and acid-insoluble organic matrix of prismatic shell layers (at protein level).

It is found in the secreted. This is an uncharacterized protein from Haliotis asinina (Donkey's ear abalone).